The sequence spans 329 residues: GTP 3',8-cyclase (329 aa).

Residues 8 to 234 (AFARKFYYLR…QIRQRSDGPA (227 aa)) form the Radical SAM core domain. R17 lines the GTP pocket. Residues C24 and C28 each contribute to the [4Fe-4S] cluster site. Y30 contacts S-adenosyl-L-methionine. C31 lines the [4Fe-4S] cluster pocket. R68 is a GTP binding site. An S-adenosyl-L-methionine-binding site is contributed by G72. Position 99 (T99) interacts with GTP. S-adenosyl-L-methionine is bound at residue S123. A GTP-binding site is contributed by K160. Residue M194 coordinates S-adenosyl-L-methionine. [4Fe-4S] cluster is bound by residues C257 and C260. 262 to 264 (RLR) contributes to the GTP binding site. C274 provides a ligand contact to [4Fe-4S] cluster.

Belongs to the radical SAM superfamily. MoaA family. Monomer and homodimer. [4Fe-4S] cluster serves as cofactor.

The catalysed reaction is GTP + AH2 + S-adenosyl-L-methionine = (8S)-3',8-cyclo-7,8-dihydroguanosine 5'-triphosphate + 5'-deoxyadenosine + L-methionine + A + H(+). It functions in the pathway cofactor biosynthesis; molybdopterin biosynthesis. In terms of biological role, catalyzes the cyclization of GTP to (8S)-3',8-cyclo-7,8-dihydroguanosine 5'-triphosphate. The polypeptide is GTP 3',8-cyclase (Klebsiella pneumoniae subsp. pneumoniae (strain ATCC 700721 / MGH 78578)).